The following is a 284-amino-acid chain: MPELPEVTTVINELKETVLNKPLDQVQVNLRKVLKNIDPQLLNKQLKNQFFTDIKRKGKYIIFLLSNGLYLVSHLRMEGKYFFEERGSKFNQKHVLVEFHFDDGSQLNYHDTRQFGTFHLYEKLEQAAQLNKLAFDPLEAGFDYRKIFQKAQNSKRKVKTFILDQTVISGIGNIYADEILFASKINPETMVDQLTIKEIEILCKNATKILAKAIVMKGTTISSFSFKKDHTGGYQNFLKVHTKKDQPCSVCNQLIVKKKINGRGSYFCLNCQKITTKVSTKLNP.

The active-site Schiff-base intermediate with DNA is Pro2. Glu3 serves as the catalytic Proton donor. Lys59 (proton donor; for beta-elimination activity) is an active-site residue. Positions 94 and 113 each coordinate DNA. The FPG-type zinc-finger motif lies at 239 to 273 (KVHTKKDQPCSVCNQLIVKKKINGRGSYFCLNCQK). Arg263 acts as the Proton donor; for delta-elimination activity in catalysis.

The protein belongs to the FPG family. In terms of assembly, monomer. Requires Zn(2+) as cofactor.

The enzyme catalyses Hydrolysis of DNA containing ring-opened 7-methylguanine residues, releasing 2,6-diamino-4-hydroxy-5-(N-methyl)formamidopyrimidine.. It carries out the reaction 2'-deoxyribonucleotide-(2'-deoxyribose 5'-phosphate)-2'-deoxyribonucleotide-DNA = a 3'-end 2'-deoxyribonucleotide-(2,3-dehydro-2,3-deoxyribose 5'-phosphate)-DNA + a 5'-end 5'-phospho-2'-deoxyribonucleoside-DNA + H(+). Involved in base excision repair of DNA damaged by oxidation or by mutagenic agents. Acts as a DNA glycosylase that recognizes and removes damaged bases. Has a preference for oxidized purines, such as 7,8-dihydro-8-oxoguanine (8-oxoG). Has AP (apurinic/apyrimidinic) lyase activity and introduces nicks in the DNA strand. Cleaves the DNA backbone by beta-delta elimination to generate a single-strand break at the site of the removed base with both 3'- and 5'-phosphates. The chain is Formamidopyrimidine-DNA glycosylase (mutM) from Mycoplasma genitalium (strain ATCC 33530 / DSM 19775 / NCTC 10195 / G37) (Mycoplasmoides genitalium).